A 72-amino-acid polypeptide reads, in one-letter code: Translation initiation factor IF-1 (72 aa).

Positions 1–72 (MAKEKDTIRT…PTRGRIVYRK (72 aa)) constitute an S1-like domain.

It belongs to the IF-1 family. Component of the 30S ribosomal translation pre-initiation complex which assembles on the 30S ribosome in the order IF-2 and IF-3, IF-1 and N-formylmethionyl-tRNA(fMet); mRNA recruitment can occur at any time during PIC assembly.

It localises to the cytoplasm. Its function is as follows. One of the essential components for the initiation of protein synthesis. Stabilizes the binding of IF-2 and IF-3 on the 30S subunit to which N-formylmethionyl-tRNA(fMet) subsequently binds. Helps modulate mRNA selection, yielding the 30S pre-initiation complex (PIC). Upon addition of the 50S ribosomal subunit IF-1, IF-2 and IF-3 are released leaving the mature 70S translation initiation complex. In Thermus thermophilus (strain ATCC BAA-163 / DSM 7039 / HB27), this protein is Translation initiation factor IF-1.